A 168-amino-acid polypeptide reads, in one-letter code: uncharacterized protein (168 aa).

Residues 7-168 (ERIDTLKTGD…TAKGWPDISM (162 aa)) enclose the N-acetyltransferase domain.

This is an uncharacterized protein from Azospirillum brasilense.